A 793-amino-acid chain; its full sequence is E3 UFM1-protein ligase 1 (793 aa).

A2 bears the N-acetylalanine mark. The segment at 2 to 200 (ADAWEEIRRL…RGLFSAITRP (199 aa)) is mediates interaction with DDRGK1. The segment at 2 to 212 (ADAWEEIRRL…VNSLVSKYGF (211 aa)) is required for E3 UFM1-protein ligase activity. Residues 121-250 (DRLSEEVNDK…KAVFVPDIYS (130 aa)) are involved in CDK5RAP3-binding. Residues 200-400 (PTAVNSLVSK…NPVHLITEED (201 aa)) form a mediates interaction with TRIP4 region. The interval 410 to 473 (VNTNKKDKKD…SSHAGKKKPD (64 aa)) is disordered. R433 carries the omega-N-methylarginine modification. Phosphoserine is present on residues S458 and S462. Residues 490-683 (IPDAPEEFIS…QLKVTEDPAL (194 aa)) form a mediates interaction with CDK5RAP3 region. Position 535 is a phosphothreonine (T535). Positions 742-769 (NKKSGQGEDPSSDDLDKEQHDVTNTTRK) are disordered. Residues S752 and S753 each carry the phosphoserine modification. A compositionally biased stretch (basic and acidic residues) spans 758–769 (KEQHDVTNTTRK).

The protein belongs to the UFL1 family. Catalytic component of the UFM1 ribosome E3 ligase (UREL) complex, composed of UFL1, DDRGK1 and CDK5RAP3. Interacts with E2-like enzyme UFC1. Interacts with RELA. Interacts with NBN; promoting recruitment to double-strand breaks following DNA damage. Interacts (when phosphorylated) with YWHAG/14-3-3-gamma; sequestering UFL1 and preventing its association with PDCD1/PD-1 substrate. In terms of processing, ubiquitinated, leading to its degradation by the proteasome. Interaction with CDK5RAP3 protects both proteins against ubiquitination and degradation via the proteasome. Phosphorylated at Ser-462 by ATM, enhancing protein ligase activity and promoting ATM activation in a positive feedback loop. Phosphorylation at Thr-535 by AMPK promotes its interaction with YWHAG/14-3-3-gamma, thereby preventing UFL1 association with PDCD1/PD-1 substrate. Ubiquitously expressed with expression detected in brain, skeletal muscle, lung, heart, gall bladder, liver, small intestine, pancreas, spleen and kidney (at protein level). At 8 weeks after birth, high expression in the Purkinje cell layer of the cerebellum.

The protein localises to the endoplasmic reticulum membrane. Its subcellular location is the cytoplasm. It localises to the cytosol. The protein resides in the nucleus. It is found in the chromosome. Functionally, E3 protein ligase that mediates ufmylation, the covalent attachment of the ubiquitin-like modifier UFM1 to lysine residues on target proteins, and which plays a key role in various processes, such as ribosome recycling, response to DNA damage, interferon response or reticulophagy (also called ER-phagy). Catalyzes ufmylation of many protein, such as CD274/PD-L1, CDK5RAP3, CYB5R3, DDRGK1, EIF6, histone H4, MRE11, P4HB, PDCD1/PD-1, TRIP4, RPN1, RPS20/uS10, RPL10/uL16, RPL26/uL24, SYVN1/HRD1 and TP53/p53. As part of the UREL complex, plays a key role in ribosome recycling by catalyzing mono-ufmylation of RPL26/uL24 subunit of the 60S ribosome. Ufmylation of RPL26/uL24 occurs on free 60S ribosomes following ribosome dissociation: it weakens the junction between post-termination 60S subunits and SEC61 translocons, promoting release and recycling of the large ribosomal subunit from the endoplasmic reticulum membrane. Ufmylation of RPL26/uL24 and subsequent 60S ribosome recycling either take place after normal termination of translation or after ribosome stalling during cotranslational translocation at the endoplasmic reticulum. Involved in reticulophagy in response to endoplasmic reticulum stress by mediating ufmylation of proteins such as CYB5R3 and RPN1, thereby promoting lysosomal degradation of ufmylated proteins. Ufmylation in response to endoplasmic reticulum stress is essential for processes such as hematopoiesis, blood vessel morphogenesis or inflammatory response. Mediates ufmylation of DDRGK1 and CDK5RAP3; the role of these modifications is however unclear: as both DDRGK1 and CDK5RAP3 act as substrate adapters for ufmylation, it is uncertain whether ufmylation of these proteins is, a collateral effect or is required for ufmylation. Acts as a negative regulator of T-cell activation by mediating ufmylation and stabilization of PDCD1/PD-1. Also involved in the response to DNA damage: recruited to double-strand break sites following DNA damage and mediates monoufmylation of histone H4 and ufmylation of MRE11. Mediates ufmylation of TP53/p53, promoting its stability. Catalyzes ufmylation of TRIP4, thereby playing a role in nuclear receptor-mediated transcription. Required for hematopoietic stem cell function and hematopoiesis. The chain is E3 UFM1-protein ligase 1 from Rattus norvegicus (Rat).